Consider the following 426-residue polypeptide: Probable M18 family aminopeptidase 2 (426 aa).

Zn(2+) is bound by residues His79, His156, and His399.

It belongs to the peptidase M18 family. Zn(2+) serves as cofactor.

The sequence is that of Probable M18 family aminopeptidase 2 (apeB) from Mycobacterium leprae (strain TN).